The primary structure comprises 100 residues: Small ribosomal subunit protein uS14 (100 aa).

The protein belongs to the universal ribosomal protein uS14 family. Part of the 30S ribosomal subunit. Contacts proteins S3 and S10.

Binds 16S rRNA, required for the assembly of 30S particles and may also be responsible for determining the conformation of the 16S rRNA at the A site. The polypeptide is Small ribosomal subunit protein uS14 (Synechococcus sp. (strain CC9902)).